A 341-amino-acid chain; its full sequence is Short chain dehydrogenase FGM9 (341 aa).

Residues leucine 38, lysine 63, aspartate 88, and asparagine 114 each contribute to the NADP(+) site. Active-site proton donor residues include serine 167 and tyrosine 200. NADP(+) is bound by residues tyrosine 200 and lysine 204. Lysine 204 (lowers pKa of active site Tyr) is an active-site residue.

It belongs to the short-chain dehydrogenases/reductases (SDR) family.

It participates in secondary metabolite biosynthesis. Short chain dehydrogenase; part of the Fg3_54/C64 gene cluster that mediates the biosynthesis of the octapeptide fusaoctaxin A, a virulence factor that is required for cell-to-cell invasiveness of plant host. The 2 nonribosomal peptide synthetases NRPS9 and NRPS5 form an assembly line which likely utilizes GABA as a starter unit (loaded on the unique module M1 of NRPS9) and sequentially incorporates seven extender units composed of the residues L-Ala, L-allo-Ile, L-Ser, L-Val, L-Ser, L-Leu and L-Leu, respectively. During the process, each of the residues that are tethered on modules M3-M7 of NRPS5 containing an E domain can undergo an epimerization reaction to produce a D-configuration before the transpeptidation reaction occurs. The elongation of the peptidyl chain might be terminated by module M8-mediated L-Leu incorporation, followed by R domain-catalyzed 4 electron reduction to release the resulting octapeptide from the assembly line as an alcohol. Fusaoctaxin A is cleaved by the cluster specific ABC transporter FGM5 to the pentapeptide fusapentaxin A and the tripeptide fusatrixin A. The other enzymes from the cluster, FGM1, FGM2, FGM3 and FGM9 seem not to be involved in the biosynthesis of fusaoctaxin A and their functions have still to be determined. This is Short chain dehydrogenase FGM9 from Gibberella zeae (strain ATCC MYA-4620 / CBS 123657 / FGSC 9075 / NRRL 31084 / PH-1) (Wheat head blight fungus).